Here is a 590-residue protein sequence, read N- to C-terminus: MNKIHLLDEKTVNKIAAGEVVERPASIVKELVENSIDAGSKNITVEILEGGIPYIKVTDDGCGMNEIDAVLAFERHATSKIRSDEDLFNITTLGFRGEALASIAAVSKVVLQTKEENETFGTRLVVEGGKILEKTRCGCQKGTSVEVKDVFFNTPARRKFLKRPSTEAMYVTEVVTRLCLSNPGISFKYVKDKKVQFITSGNGSIEDVILRLFGKEVHSALIFSEFEAEDLKVKAFATKNFLNYSNRNMQFFYVNGRYVKNKTLSAAVDEAFKTYVPSDRYPGVFLYLEINPRFIDVNIHPSKLEVKFSDDRRIFESVYRTIREALRESNLIPEVKLEKDLKNEEGQIGEQVKLSLPLFEVKEKTDDGAIFVREEVKTEEKIDKAPKHESSSDSERNVKRLSDIRIVGTLFSTYVIVEKGDVFYIIDQHAAHERILYEKLVSQYERVQSRQVTFPIVVELQPGDMEIVGQERELLYKLGYVFEEFGNNSVVLREVPVILGQPEAKKLFVEIVERLRDKDFSSKVSFKEEEIATMACKAAVKAMDTLSENEIYKLFEDLKIAENPYTCPHGRPVIISMTKTQLEKMFKRIK.

This sequence belongs to the DNA mismatch repair MutL/HexB family.

This protein is involved in the repair of mismatches in DNA. It is required for dam-dependent methyl-directed DNA mismatch repair. May act as a 'molecular matchmaker', a protein that promotes the formation of a stable complex between two or more DNA-binding proteins in an ATP-dependent manner without itself being part of a final effector complex. This is DNA mismatch repair protein MutL from Caldanaerobacter subterraneus subsp. tengcongensis (strain DSM 15242 / JCM 11007 / NBRC 100824 / MB4) (Thermoanaerobacter tengcongensis).